Here is a 440-residue protein sequence, read N- to C-terminus: Trigger factor (440 aa).

A PPIase FKBP-type domain is found at 176–261 (GDKVVIDYQN…VKSIYVVKDV (86 aa)).

This sequence belongs to the FKBP-type PPIase family. Tig subfamily.

It localises to the cytoplasm. The enzyme catalyses [protein]-peptidylproline (omega=180) = [protein]-peptidylproline (omega=0). Functionally, involved in protein export. Acts as a chaperone by maintaining the newly synthesized protein in an open conformation. Functions as a peptidyl-prolyl cis-trans isomerase. In Ehrlichia canis (strain Jake), this protein is Trigger factor.